The following is a 1072-amino-acid chain: MLGDGKEGTSTIPGFNQIQFEGFYRFIDQGLIEELSKFPKIEDIDHEIEFQLFMETYQLVEPLIKERDAVYESLTYSSELYVSAGLIWKTSRNMQEQRIFIGNIPLMNSLGTSIVNGIYRIVINQILQSPGIYYQSELDHNGISVYTGTIISDWGGRLELEIDKKARIWARVSRKQKISILVLSSAMGSNLREILENVCYPEIFLSFLTDKEKKKIGSKENAILEFYQQFSCVGGDPIFSESLCKELQKKFFHQRCELGRIGRRNINWRLNLNIPQNNIFLLPRDILAAADHLIGMKFGMGTLDDMNHLKNKRIRSVADLLQDQLGLALSRLENVVKGTISGAIRHKLIPTPQNLVTSTPLTTTYESFFGLHPLSQVLDRTNPLTQIVHGRKLSYLGPGGLTGRTANFRIRDIHPSHYGRICPIDTSEGINVGLIGSLSIHARIGDWGSLESPFYELFEKSKKARIRMLFLSPSQDEYFMIAAGNSLALNRGIQEEQAVPARYRQEFLTIAWEEVHLRSIFPFQYFSIGASLIPFIEHNDANRALMSSNMQRQAVPLSRSEKCIVGTGLERQVALDSGVPAIAEHEGKILYTDTEKIVFSGNGDTLSIPLIMYERSNKNTCMHQKPQVRRGKCIKKGQILADGAATVGGELALGKNILVAYMPWEGYNFEDAVLISECLVYGDIYTSFHIRKYEIQTHVTTQGPERITKEIPHLEGRLLRHLDKNGIVMLGSWVETGDILVGKLTPQVAKESSYAPEDRLLRAILGIQVSTSKETCLKLPIGGRGRVIDVRWVQKKGGSSYNPEIIRVYISQKREIKVGDKVAGRHGNKGIISKILPRQDMPYLQDGRPVDMVFNPLGVPSRMNVGQIFECSLGLAGSLLDRHYRIAPFDERYEQEASRKLVFSELYKASKQTANPWVFEPEYPGKSRIFDGRTGDPFEQPVIIGKPYILKLIHQVDDKIHGRSSGHYALVTQQPLRGRSKQGGQRVGEMEVWALEGFGVAHILQEMLTYKSDHIRARQEVLGTTIIGGTIPKPEDAPESFRLLVRELRSLALELNHFLVSEKNFQINRKEV.

The protein belongs to the RNA polymerase beta chain family. In terms of assembly, in plastids the minimal PEP RNA polymerase catalytic core is composed of four subunits: alpha, beta, beta', and beta''. When a (nuclear-encoded) sigma factor is associated with the core the holoenzyme is formed, which can initiate transcription.

The protein localises to the plastid. The protein resides in the chloroplast. It catalyses the reaction RNA(n) + a ribonucleoside 5'-triphosphate = RNA(n+1) + diphosphate. Functionally, DNA-dependent RNA polymerase catalyzes the transcription of DNA into RNA using the four ribonucleoside triphosphates as substrates. The sequence is that of DNA-directed RNA polymerase subunit beta from Nasturtium officinale (Watercress).